Consider the following 299-residue polypeptide: Hydrogenase maturation factor HypB (299 aa).

The Ni(2+) site is built by Cys2, Cys5, and Cys7. The interval 18-57 (EVGDDGHGHHHHDGHHDHDHDHDHHRGDHEHDDHHHAEDG) is disordered. A compositionally biased stretch (basic and acidic residues) spans 31–57 (GHHDHDHDHDHHRGDHEHDDHHHAEDG). The segment at 107 to 268 (ALNFVSSPGS…LRVNPRLQTL (162 aa)) is G-domain. Residues Cys167, His168, and Cys199 each contribute to the Ni(2+) site. Zn(2+)-binding residues include Cys167, His168, and Cys199.

It belongs to the SIMIBI class G3E GTPase family. HypB/HupM subfamily.

In terms of biological role, involved in the maturation of [NiFe] hydrogenases. Required for nickel insertion into the metal center of the hydrogenase. Exhibits a low intrinsic GTPase activity, which is essential for nickel insertion. Is able to bind 4 nickel ions per subunit. Can also bind zinc. The sequence is that of Hydrogenase maturation factor HypB from Rhizobium leguminosarum bv. viciae.